The sequence spans 140 residues: Acyl-coenzyme A thioesterase PaaI (140 aa).

As to quaternary structure, homotetramer.

Its pathway is aromatic compound metabolism; phenylacetate degradation. In terms of biological role, thioesterase with a preference for ring-hydroxylated phenylacetyl-CoA esters. Hydrolyzes 3,4-dihydroxyphenylacetyl-CoA, 3-hydroxyphenylacetyl-CoA and 4-hydroxyphenylacetyl-CoA. Inactive towards 4-hydroxybenzoyl-CoA and 4-hydroxyphenacyl-CoA. This Escherichia coli (strain K12) protein is Acyl-coenzyme A thioesterase PaaI (paaI).